The following is a 278-amino-acid chain: Large ribosomal subunit protein uL2 (278 aa).

Residues 202 to 278 (ANINDGKAGR…IMRSRHQRKK (77 aa)) are disordered.

Belongs to the universal ribosomal protein uL2 family. Part of the 50S ribosomal subunit. Forms a bridge to the 30S subunit in the 70S ribosome.

Its function is as follows. One of the primary rRNA binding proteins. Required for association of the 30S and 50S subunits to form the 70S ribosome, for tRNA binding and peptide bond formation. It has been suggested to have peptidyltransferase activity; this is somewhat controversial. Makes several contacts with the 16S rRNA in the 70S ribosome. This Rhizobium johnstonii (strain DSM 114642 / LMG 32736 / 3841) (Rhizobium leguminosarum bv. viciae) protein is Large ribosomal subunit protein uL2.